The chain runs to 301 residues: Aquaporin-10 (301 aa).

Topologically, residues 1–22 (MVFTQAPAEIMGHLRIRSLLAR) are cytoplasmic. Residues 23 to 41 (QCLAEFLGVFVLMLLTQGA) traverse the membrane as a helical segment. Topologically, residues 42-55 (VAQAVTSGETKGNF) are extracellular. A helical transmembrane segment spans residues 56–75 (FTMFLAGSLAVTIAIYVGGN). Topologically, residues 76-77 (VS) are cytoplasmic. Positions 78–90 (GAHLNPAFSLAMC) form an intramembrane region, discontinuously helical. The NPA 1 motif lies at 82 to 84 (NPA). Residues 91-96 (IVGRLP) lie on the Cytoplasmic side of the membrane. The chain crosses the membrane as a helical span at residues 97–121 (WVKLPIYILVQLLSAFCASGATYVL). The Extracellular portion of the chain corresponds to 122–158 (YHDALQNYTGGNLTVTGPKETASIFATYPAPYLSLNN). N-linked (GlcNAc...) asparagine glycans are attached at residues Asn-128 and Asn-133. Residues 159–176 (GFLDQVLGTGMLIVGLLA) form a helical membrane-spanning segment. The Cytoplasmic segment spans residues 177-188 (ILDRRNKGVPAG). A helical transmembrane segment spans residues 189-205 (LEPVVVGMLILALGLSM). At 206–208 (GAN) the chain is on the extracellular side. Positions 209–223 (CGIPLNPARDLGPRL) form an intramembrane region, discontinuously helical. An NPA 2 motif is present at residues 214–216 (NPA). Over 224–241 (FTYVAGWGPEVFSAGNGW) the chain is Extracellular. The helical transmembrane segment at 242 to 262 (WWVPVVAPLVGATVGTATYQL) threads the bilayer. The Cytoplasmic segment spans residues 263-301 (LVALHHPEGPEPAQDLVSAQHKASELETPASAQMLECKL).

It belongs to the MIP/aquaporin (TC 1.A.8) family. Homotetramer; each monomer provides an independent glycerol/water pore. Post-translationally, N-glycosylation at Asn-133 increases the stability of the protein but has no effect on its activity. Detected in epithelial cells on villi in the ileum, and also in stomach, jejunum, colon, rectum, white adipose tissue and placenta (at protein level). Expressed in duodenum and jejunum. Highest expression in absorptive epithelial cells at the tips of villi in the jejunum. Detected in subcutaneous adipose tissue.

The protein resides in the apical cell membrane. It localises to the cell membrane. It is found in the lipid droplet. The enzyme catalyses glycerol(in) = glycerol(out). The catalysed reaction is H2O(in) = H2O(out). It catalyses the reaction urea(in) = urea(out). With respect to regulation, glycerol transport is regulated by pH, with the porin being permeable to glycerol at pH 5.5 but not at pH 7.4. Water permeability, however, is not influenced by pH. Aquaglyceroporins form homotetrameric transmembrane channels, with each monomer independently mediating glycerol and water transport across the plasma membrane along their osmotic gradient. Could also be permeable to urea. Among aquaglyceroporins, it exhibits a unique pH-gated glycerol transport activity, being more active at acidic pH. It most likely plays a central role in the efflux of glycerol formed during triglyceride hydrolysis in adipocytes and in glycerol uptake by enterocytes, as both processes occur and are stimulated at acidic pH. This is Aquaporin-10 from Homo sapiens (Human).